Here is a 63-residue protein sequence, read N- to C-terminus: Large ribosomal subunit protein uL30 (63 aa).

It belongs to the universal ribosomal protein uL30 family. Part of the 50S ribosomal subunit.

The protein is Large ribosomal subunit protein uL30 of Chlorobium chlorochromatii (strain CaD3).